The following is a 452-amino-acid chain: uncharacterized protein (452 aa).

This is an uncharacterized protein from Acanthamoeba polyphaga (Amoeba).